Consider the following 1120-residue polypeptide: Probable leucine-rich repeat receptor-like protein kinase At1g35710 (1120 aa).

An N-terminal signal peptide occupies residues 1-29 (MGFAEKNLYDFRFLLFISIILSCSISASA). The Extracellular segment spans residues 30-783 (TIAEANALLK…RELKKPKKNG (754 aa)). 4 N-linked (GlcNAc...) asparagine glycosylation sites follow: Asn46, Asn60, Asn83, and Asn124. 27 LRR repeats span residues 78-100 (SIEE…PFIS), 103-125 (NLAY…FGNL), 127-150 (KLIY…GNLK), 151-172 (NLTV…ELGN), 175-198 (SMTD…GNLK), 199-221 (NLMV…LGNM), 223-246 (SMTD…GNLK), 247-269 (NLMV…IGNM), 271-294 (SMTN…GNLK), 295-317 (NLTL…LGNI), 319-342 (SMID…GNLK), 343-365 (NLTI…LGNM), 367-389 (SMID…FGNL), 391-412 (NLTY…ELGN), 415-437 (SMIN…FGNF), 439-461 (KLES…VANS), 463-484 (HLTT…TVCK), 487-510 (KLQN…RDCK), 535-557 (DLNF…WEKS), 559-581 (KLGA…IWNM), 583-605 (QLVE…IGNL), 607-630 (NLSR…SFLT), 631-652 (NLES…TFDS), 655-677 (KLHD…SKLT), 678-701 (QLTQ…SSLQ), 702-723 (SLDK…TFEG), and 726-748 (ALTN…PTFR). Residue Asn151 is glycosylated (N-linked (GlcNAc...) asparagine). The N-linked (GlcNAc...) asparagine glycan is linked to Asn295. N-linked (GlcNAc...) asparagine glycosylation occurs at Asn343. N-linked (GlcNAc...) asparagine glycans are attached at residues Asn391, Asn436, Asn460, Asn473, and Asn490. N-linked (GlcNAc...) asparagine glycosylation is found at Asn569, Asn580, Asn604, Asn607, Asn641, and Asn660. Asn712 carries an N-linked (GlcNAc...) asparagine glycan. The chain crosses the membrane as a helical span at residues 784-804 (NLVVWILVPILGVLVILSICA). At 805 to 1120 (NTFTYCIRKR…TMLSISTTFS (316 aa)) the chain is on the cytoplasmic side. Thr848 carries the post-translational modification Phosphothreonine. Residues 851–1120 (FDPTHLIGTG…TMLSISTTFS (270 aa)) form the Protein kinase domain. Residues 857–865 (IGTGGYSKV) and Lys878 contribute to the ATP site. Phosphotyrosine is present on residues Tyr929 and Tyr968. Asp981 (proton acceptor) is an active-site residue. A Phosphoserine modification is found at Ser1014. Tyr1022 and Tyr1029 each carry phosphotyrosine. At Thr1030 the chain carries Phosphothreonine.

It belongs to the protein kinase superfamily. Ser/Thr protein kinase family.

Its subcellular location is the membrane. It catalyses the reaction L-seryl-[protein] + ATP = O-phospho-L-seryl-[protein] + ADP + H(+). The catalysed reaction is L-threonyl-[protein] + ATP = O-phospho-L-threonyl-[protein] + ADP + H(+). This chain is Probable leucine-rich repeat receptor-like protein kinase At1g35710, found in Arabidopsis thaliana (Mouse-ear cress).